The sequence spans 433 residues: 3-phosphoshikimate 1-carboxyvinyltransferase (433 aa).

3-phosphoshikimate-binding residues include Lys-22, Ser-23, and Arg-27. Lys-22 is a binding site for phosphoenolpyruvate. Residues Gly-94 and Arg-123 each contribute to the phosphoenolpyruvate site. Residues Ser-168, Gln-170, Asp-319, and Lys-346 each contribute to the 3-phosphoshikimate site. Residue Gln-170 participates in phosphoenolpyruvate binding. Residue Asp-319 is the Proton acceptor of the active site. 2 residues coordinate phosphoenolpyruvate: Arg-350 and Arg-392.

It belongs to the EPSP synthase family. Monomer.

Its subcellular location is the cytoplasm. The enzyme catalyses 3-phosphoshikimate + phosphoenolpyruvate = 5-O-(1-carboxyvinyl)-3-phosphoshikimate + phosphate. Its pathway is metabolic intermediate biosynthesis; chorismate biosynthesis; chorismate from D-erythrose 4-phosphate and phosphoenolpyruvate: step 6/7. In terms of biological role, catalyzes the transfer of the enolpyruvyl moiety of phosphoenolpyruvate (PEP) to the 5-hydroxyl of shikimate-3-phosphate (S3P) to produce enolpyruvyl shikimate-3-phosphate and inorganic phosphate. The chain is 3-phosphoshikimate 1-carboxyvinyltransferase from Roseiflexus sp. (strain RS-1).